The chain runs to 439 residues: Chitinase-like protein Idgf1 (439 aa).

The first 20 residues, 1-20, serve as a signal peptide directing secretion; that stretch reads MRFQLCYLLGLLSVTSLSHA. The 418-residue stretch at 22-439 folds into the GH18 domain; that stretch reads SNLICYYDST…IVRSIKYFMG (418 aa). An intrachain disulfide couples Cys-26 to Cys-53. 3 N-linked (GlcNAc...) asparagine glycosylation sites follow: Asn-122, Asn-218, and Asn-346. Cys-340 and Cys-423 are oxidised to a cystine.

It belongs to the glycosyl hydrolase 18 family. IDGF subfamily. In terms of processing, glycosylated.

Its subcellular location is the secreted. Its function is as follows. Cooperates with insulin-like peptides to stimulate the proliferation, polarization and motility of imaginal disk cells. May act by stabilizing the binding of insulin-like peptides to its receptor through a simultaneous interaction with both molecules to form a multiprotein signaling complex. The sequence is that of Chitinase-like protein Idgf1 (Idgf1) from Drosophila yakuba (Fruit fly).